Here is a 281-residue protein sequence, read N- to C-terminus: Nucleotide-binding protein Noc_2797 (281 aa).

8–15 is a binding site for ATP; the sequence is GVSGSGKS. 58–61 provides a ligand contact to GTP; the sequence is DARN.

Belongs to the RapZ-like family.

Displays ATPase and GTPase activities. The sequence is that of Nucleotide-binding protein Noc_2797 from Nitrosococcus oceani (strain ATCC 19707 / BCRC 17464 / JCM 30415 / NCIMB 11848 / C-107).